We begin with the raw amino-acid sequence, 395 residues long: Multidrug resistance protein MdtL (395 aa).

The next 12 membrane-spanning stretches (helical) occupy residues 4–24, 42–62, 69–89, 93–113, 131–151, 158–178, 217–237, 247–267, 271–291, 295–315, 328–350, and 355–377; these read FLLCSFALVLLYPAGIDMYLV, IAFSVYLAGMATAMLFAGKIA, PVAIVGALVFMTASLLCSRAS, LFLSGRFLQGVGAGGCYVVAF, LLNGITCIVPVLAPVMGHLIM, SLFYTMSAMGIIVGLLSLFIL, VSVILTFVNASPVLLMEVMGF, ALTAGVSMVVSFSTPFALGLF, TLMLVSQGLFLTAGVTLSLAH, VTLFGLTLICAGFSVGFGVAM, VASSTLGIAQVCGSSLWIWLAAI, and AMNMLIGILIGCSIVSILLIFSV.

The protein belongs to the major facilitator superfamily. DHA1 family. MdtL (TC 2.A.1.2.22) subfamily.

The protein resides in the cell inner membrane. This chain is Multidrug resistance protein MdtL, found in Salmonella schwarzengrund (strain CVM19633).